Consider the following 714-residue polypeptide: Protein spire homolog 2 (714 aa).

One can recognise a KIND domain in the interval 22-203; the sequence is LSLEEVLKAY…RALFVETLEL (182 aa). Residues 136 to 162 are disordered; sequence DSEDSGCGAADEGYGGPEEEEEAEGVP. WH2 domains are found at residues 248–262, 278–296, and 342–359; these read QLMR…LKKV, PFEM…LRKV, and LHEK…LRPV. A phosphoserine mark is found at S371, S440, S442, and S476. The tract at residues 453 to 516 is disordered; the sequence is VASGLQSATH…SSGDRPEASM (64 aa). Polar residues predominate over residues 486–496; sequence DQGTCPASVSD. The spir-box stretch occupies residues 534–554; that stretch reads LALTVEEVMDVRRVLVKAEME.

It belongs to the spire family.

Its subcellular location is the cytoplasm. It is found in the cytoskeleton. It localises to the cytosol. The protein resides in the cell membrane. The protein localises to the cytoplasmic vesicle membrane. Acts as an actin nucleation factor, remains associated with the slow-growing pointed end of the new filament. Involved in intracellular vesicle transport along actin fibers, providing a novel link between actin cytoskeleton dynamics and intracellular transport. Required for asymmetric spindle positioning and asymmetric cell division during meiosis. Required for normal formation of the cleavage furrow and for polar body extrusion during female germ cell meiosis. Also acts in the nucleus: together with SPIRE1 and SPIRE2, promotes assembly of nuclear actin filaments in response to DNA damage in order to facilitate movement of chromatin and repair factors after DNA damage. The chain is Protein spire homolog 2 (SPIRE2) from Homo sapiens (Human).